Here is a 231-residue protein sequence, read N- to C-terminus: Fibrillarin-like rRNA/tRNA 2'-O-methyltransferase (231 aa).

S-adenosyl-L-methionine-binding positions include T88–T89, E106–F107, D131–A132, and D151–Q154.

It belongs to the methyltransferase superfamily. Fibrillarin family. Interacts with nop5. Component of box C/D small ribonucleoprotein (sRNP) particles that contain rpl7ae, FlpA and nop5, plus a guide RNA.

Involved in pre-rRNA and tRNA processing. Utilizes the methyl donor S-adenosyl-L-methionine to catalyze the site-specific 2'-hydroxyl methylation of ribose moieties in rRNA and tRNA. Site specificity is provided by a guide RNA that base pairs with the substrate. Methylation occurs at a characteristic distance from the sequence involved in base pairing with the guide RNA. This Methanococcus aeolicus (strain ATCC BAA-1280 / DSM 17508 / OCM 812 / Nankai-3) protein is Fibrillarin-like rRNA/tRNA 2'-O-methyltransferase.